The sequence spans 403 residues: D-galactonate dehydratase family member Mmwyl1_0037 (403 aa).

Positions 37 and 122 each coordinate substrate. Tyrosine 159 (proton donor/acceptor) is an active-site residue. Aspartate 211 provides a ligand contact to Mg(2+). Residue histidine 213 is the Proton donor/acceptor of the active site. Positions 237 and 263 each coordinate Mg(2+). Residues glutamate 263, arginine 284, histidine 313, aspartate 317, and glutamate 340 each contribute to the substrate site.

This sequence belongs to the mandelate racemase/muconate lactonizing enzyme family. GalD subfamily. The cofactor is Mg(2+).

It catalyses the reaction D-mannonate = 2-dehydro-3-deoxy-D-gluconate + H2O. In terms of biological role, has low D-mannonate dehydratase activity (in vitro), suggesting that this is not a physiological substrate and that it has no significant role in D-mannonate degradation in vivo. Has no detectable activity with a panel of 70 other acid sugars (in vitro). In Marinomonas sp. (strain MWYL1), this protein is D-galactonate dehydratase family member Mmwyl1_0037.